A 59-amino-acid chain; its full sequence is MPVPKKKTSKARSRRRYAVWLGKAKLQAQRAMTIGRAILSGRNTGFYYPKAKSEEDEEE.

This sequence belongs to the bacterial ribosomal protein bL32 family.

This is Large ribosomal subunit protein bL32 from Synechococcus sp. (strain JA-2-3B'a(2-13)) (Cyanobacteria bacterium Yellowstone B-Prime).